A 396-amino-acid chain; its full sequence is Tryptophan synthase beta chain (396 aa).

Lys-86 is modified (N6-(pyridoxal phosphate)lysine).

This sequence belongs to the TrpB family. In terms of assembly, tetramer of two alpha and two beta chains. Requires pyridoxal 5'-phosphate as cofactor.

The catalysed reaction is (1S,2R)-1-C-(indol-3-yl)glycerol 3-phosphate + L-serine = D-glyceraldehyde 3-phosphate + L-tryptophan + H2O. It functions in the pathway amino-acid biosynthesis; L-tryptophan biosynthesis; L-tryptophan from chorismate: step 5/5. In terms of biological role, the beta subunit is responsible for the synthesis of L-tryptophan from indole and L-serine. The polypeptide is Tryptophan synthase beta chain (Aliivibrio salmonicida (strain LFI1238) (Vibrio salmonicida (strain LFI1238))).